A 155-amino-acid polypeptide reads, in one-letter code: Lipoprotein signal peptidase (155 aa).

Helical transmembrane passes span 7-27, 39-59, 63-83, and 96-116; these read WFWI…YITV, IIPG…FSAF, VGWL…FAYF, and GFIL…GYVV. Residues aspartate 117 and aspartate 133 contribute to the active site. The chain crosses the membrane as a helical span at residues 126–146; sequence FPVFNLADVFINIGIICLLIS.

The protein belongs to the peptidase A8 family.

The protein resides in the cell inner membrane. It catalyses the reaction Release of signal peptides from bacterial membrane prolipoproteins. Hydrolyzes -Xaa-Yaa-Zaa-|-(S,diacylglyceryl)Cys-, in which Xaa is hydrophobic (preferably Leu), and Yaa (Ala or Ser) and Zaa (Gly or Ala) have small, neutral side chains.. Its pathway is protein modification; lipoprotein biosynthesis (signal peptide cleavage). This protein specifically catalyzes the removal of signal peptides from prolipoproteins. The polypeptide is Lipoprotein signal peptidase (Microcystis aeruginosa (strain NIES-843 / IAM M-2473)).